A 198-amino-acid chain; its full sequence is Peroxiredoxin-2 (198 aa).

The residue at position 2 (alanine 2) is an N-acetylalanine. Residues 6-164 (AQIGKSAPDF…ALRLVQAFQY (159 aa)) enclose the Thioredoxin domain. Position 11 is a phosphoserine (serine 11). Cysteine 51 functions as the Cysteine sulfenic acid (-SOH) intermediate in the catalytic mechanism. Serine 112 carries the phosphoserine modification. Residue threonine 182 is modified to Phosphothreonine. Residue lysine 196 is modified to N6-acetyllysine.

The protein belongs to the peroxiredoxin family. AhpC/Prx1 subfamily. Homodimer; disulfide-linked, upon oxidation. 5 homodimers assemble to form a ring-like decamer. Interacts with TIPIN. The enzyme can be inactivated by further oxidation of the cysteine sulfenic acid (C(P)-SOH) to sulphinic acid (C(P)-SO2H) instead of its condensation to a disulfide bond. It can be reactivated by forming a transient disulfide bond with sulfiredoxin SRXN1, which reduces the cysteine sulfinic acid in an ATP- and Mg-dependent manner. In terms of processing, acetylation increases resistance to transition to high molecular-mass complexes. Deacetylated by HDAC6 which decreases reducing activity. In terms of tissue distribution, widely expressed with highest levels in bone marrow. High levels also found in heart, brain, kidney and skeletal muscle. Lower levels in liver, lung and thymus.

It is found in the cytoplasm. The catalysed reaction is a hydroperoxide + [thioredoxin]-dithiol = an alcohol + [thioredoxin]-disulfide + H2O. Functionally, thiol-specific peroxidase that catalyzes the reduction of hydrogen peroxide and organic hydroperoxides to water and alcohols, respectively. Plays a role in cell protection against oxidative stress by detoxifying peroxides and as sensor of hydrogen peroxide-mediated signaling events. Might participate in the signaling cascades of growth factors and tumor necrosis factor-alpha by regulating the intracellular concentrations of H(2)O(2). This chain is Peroxiredoxin-2 (Prdx2), found in Mus musculus (Mouse).